The following is a 446-amino-acid chain: ATP-dependent protease ATPase subunit HslU (446 aa).

ATP is bound by residues V18, 60–65 (GVGKTE), D259, E324, and R396.

This sequence belongs to the ClpX chaperone family. HslU subfamily. A double ring-shaped homohexamer of HslV is capped on each side by a ring-shaped HslU homohexamer. The assembly of the HslU/HslV complex is dependent on binding of ATP.

The protein localises to the cytoplasm. ATPase subunit of a proteasome-like degradation complex; this subunit has chaperone activity. The binding of ATP and its subsequent hydrolysis by HslU are essential for unfolding of protein substrates subsequently hydrolyzed by HslV. HslU recognizes the N-terminal part of its protein substrates and unfolds these before they are guided to HslV for hydrolysis. The chain is ATP-dependent protease ATPase subunit HslU from Acidovorax sp. (strain JS42).